A 256-amino-acid chain; its full sequence is Protein YIPF7 (256 aa).

The Cytoplasmic segment spans residues 1–125; it reads MSNLAQFDSD…VDGSIMNETD (125 aa). Polar residues-rich tracts occupy residues 18 to 31 and 38 to 48; these read IDNQ…SNAY and RKQQAGEQPQP. Residues 18–48 form a disordered region; it reads IDNQEQSGNDSNAYGNLYGSRKQQAGEQPQP. The chain crosses the membrane as a helical span at residues 126–146; sequence LTGPILFCVALGATLLLAGKV. Glutamine 147 is a topological domain (extracellular). Residues 148-168 traverse the membrane as a helical segment; it reads FGYVYGMSAIGCLVIHALLNL. The Cytoplasmic portion of the chain corresponds to 169 to 172; that stretch reads MSSS. Residues 173 to 193 form a helical membrane-spanning segment; that stretch reads GVSYGCVASVLGYCLLPMVIL. The Extracellular portion of the chain corresponds to 194-196; sequence SGC. Residues 197–217 form a helical membrane-spanning segment; that stretch reads AMFFSLQGIFGIMSSLVIIGW. Topologically, residues 218–235 are cytoplasmic; sequence CSLSASKIFIAALHMEGQ. The chain crosses the membrane as a helical span at residues 236 to 256; sequence QLLVAYPCAILYGLFALLTIF.

This sequence belongs to the YIP1 family.

The protein resides in the endoplasmic reticulum membrane. Its subcellular location is the golgi apparatus. The protein localises to the cis-Golgi network membrane. It localises to the trans-Golgi network membrane. The polypeptide is Protein YIPF7 (YIPF7) (Homo sapiens (Human)).